A 265-amino-acid polypeptide reads, in one-letter code: GTP cyclohydrolase FolE2 (265 aa).

The protein belongs to the GTP cyclohydrolase IV family.

It carries out the reaction GTP + H2O = 7,8-dihydroneopterin 3'-triphosphate + formate + H(+). The protein operates within cofactor biosynthesis; 7,8-dihydroneopterin triphosphate biosynthesis; 7,8-dihydroneopterin triphosphate from GTP: step 1/1. Functionally, converts GTP to 7,8-dihydroneopterin triphosphate. The chain is GTP cyclohydrolase FolE2 from Magnetococcus marinus (strain ATCC BAA-1437 / JCM 17883 / MC-1).